A 527-amino-acid chain; its full sequence is EGF domain-specific O-linked N-acetylglucosamine transferase (527 aa).

The N-terminal stretch at 1 to 17 is a signal peptide; that stretch reads MFMLLVFGALLPEVPLS. The short motif at 295 to 297 is the Required for optimal activity element; that stretch reads DYD. N-linked (GlcNAc...) asparagine glycosylation occurs at Asn-354. The Prevents secretion from ER signature appears at 524-527; it reads HDEL.

The protein belongs to the glycosyltransferase 61 family.

It localises to the endoplasmic reticulum lumen. The enzyme catalyses L-seryl-[protein] + UDP-N-acetyl-alpha-D-glucosamine = 3-O-(N-acetyl-beta-D-glucosaminyl)-L-seryl-[protein] + UDP + H(+). It carries out the reaction L-threonyl-[protein] + UDP-N-acetyl-alpha-D-glucosamine = 3-O-(N-acetyl-beta-D-glucosaminyl)-L-threonyl-[protein] + UDP + H(+). Catalyzes the transfer of a single N-acetylglucosamine from UDP-GlcNAc to a serine or threonine residue in extracellular proteins resulting in their modification with a beta-linked N-acetylglucosamine (O-GlcNAc). Specifically glycosylates the Thr residue located between the fifth and sixth conserved cysteines of folded EGF-like domains. The protein is EGF domain-specific O-linked N-acetylglucosamine transferase (EOGT) of Bos taurus (Bovine).